A 512-amino-acid polypeptide reads, in one-letter code: Vacuolar protein sorting-associated protein 30 (512 aa).

The BARA stretch occupies residues 294–511 (TNIYNESFRI…LVFCSSKLSL (218 aa)).

Belongs to the beclin family. As to quaternary structure, component of the autophagy-specific VPS34 PI3-kinase complex I composed of VPS15, VPS30, VPS34, ATG14 and ATG38; and of the VPS34 PI3-kinase complex II composed of VPS15, VPS30, VPS34 and VPS38.

Its subcellular location is the endosome membrane. It localises to the vacuole membrane. It is found in the preautophagosomal structure membrane. Functionally, required for cytoplasm to vacuole transport (Cvt), autophagy, nucleophagy, and mitophagy, as a part of the autophagy-specific VPS34 PI3-kinase complex I. This complex is essential to recruit the ATG8-phosphatidylinositol conjugate and the ATG12-ATG5 conjugate to the pre-autophagosomal structure. Also involved in endosome-to-Golgi retrograde transport as part of the VPS34 PI3-kinase complex II. This second complex is required for the endosome-to-Golgi retrieval of PEP1 and KEX2, and the recruitment of VPS5 and VPS7, two components of the retromer complex, to endosomal membranes (probably through the synthesis of a specific pool of phosphatidylinositol 3-phosphate recruiting the retromer to the endosomes). Required for survival and/or proliferation in kidneys but not brain. In Candida glabrata (strain ATCC 2001 / BCRC 20586 / JCM 3761 / NBRC 0622 / NRRL Y-65 / CBS 138) (Yeast), this protein is Vacuolar protein sorting-associated protein 30.